Here is a 207-residue protein sequence, read N- to C-terminus: Large ribosomal subunit protein uL4 (207 aa).

Residues Gly-47 to Ile-78 form a disordered region. The span at Gly-60–Gly-71 shows a compositional bias: basic residues.

This sequence belongs to the universal ribosomal protein uL4 family. As to quaternary structure, part of the 50S ribosomal subunit.

Functionally, one of the primary rRNA binding proteins, this protein initially binds near the 5'-end of the 23S rRNA. It is important during the early stages of 50S assembly. It makes multiple contacts with different domains of the 23S rRNA in the assembled 50S subunit and ribosome. Forms part of the polypeptide exit tunnel. This chain is Large ribosomal subunit protein uL4, found in Listeria innocua serovar 6a (strain ATCC BAA-680 / CLIP 11262).